Reading from the N-terminus, the 247-residue chain is MPRFKLTLEYDGSNYAGWQRQAELRTIQSALEQALFHFSGQQLTITTAGRTDAGVHATGQVAHVDFEKNWRTHTVRDALNAHLQKQGDNIAILHVQNVPDSFDARFSAIKRHYLFKILNRRSPPALNTKRVWWIPKPLNAQAMHEAAQKLVGKHDFTTFRSAHCQAKSPIRTLERLDVQREGEEIFLYAQARSFLHHQIRSFAGSLMEVGIGRWTTQDLEAALHAKDRTRCGMVAPPSGLYLTKVEY.

Asp-52 functions as the Nucleophile in the catalytic mechanism. Substrate is bound at residue Tyr-113.

This sequence belongs to the tRNA pseudouridine synthase TruA family. As to quaternary structure, homodimer.

It carries out the reaction uridine(38/39/40) in tRNA = pseudouridine(38/39/40) in tRNA. In terms of biological role, formation of pseudouridine at positions 38, 39 and 40 in the anticodon stem and loop of transfer RNAs. This is tRNA pseudouridine synthase A from Bartonella henselae (strain ATCC 49882 / DSM 28221 / CCUG 30454 / Houston 1) (Rochalimaea henselae).